The sequence spans 388 residues: Succinate--CoA ligase [ADP-forming] subunit beta (388 aa).

The ATP-grasp domain occupies 9 to 245; sequence KELLASYGLP…KSQENERELK (237 aa). ATP-binding positions include lysine 46, 53-55, glutamate 100, tyrosine 103, and glutamate 108; that span reads GRG. Residues asparagine 200 and aspartate 214 each coordinate Mg(2+). Residues asparagine 265 and 322 to 324 each bind substrate; that span reads GIV.

This sequence belongs to the succinate/malate CoA ligase beta subunit family. As to quaternary structure, heterotetramer of two alpha and two beta subunits. It depends on Mg(2+) as a cofactor.

It carries out the reaction succinate + ATP + CoA = succinyl-CoA + ADP + phosphate. The catalysed reaction is GTP + succinate + CoA = succinyl-CoA + GDP + phosphate. Its pathway is carbohydrate metabolism; tricarboxylic acid cycle; succinate from succinyl-CoA (ligase route): step 1/1. In terms of biological role, succinyl-CoA synthetase functions in the citric acid cycle (TCA), coupling the hydrolysis of succinyl-CoA to the synthesis of either ATP or GTP and thus represents the only step of substrate-level phosphorylation in the TCA. The beta subunit provides nucleotide specificity of the enzyme and binds the substrate succinate, while the binding sites for coenzyme A and phosphate are found in the alpha subunit. The sequence is that of Succinate--CoA ligase [ADP-forming] subunit beta from Neisseria gonorrhoeae (strain NCCP11945).